The following is a 304-amino-acid chain: Zinc carboxypeptidase (304 aa).

Residues 1–294 (QYHTLPEIYS…DSVVTILKES (294 aa)) form the Peptidase M14 domain. Residues histidine 58 and glutamate 61 each coordinate Zn(2+). A disulfide bridge connects residues cysteine 125 and cysteine 148. Histidine 184 serves as a coordination point for Zn(2+). Catalysis depends on glutamate 259, which acts as the Proton donor/acceptor.

This sequence belongs to the peptidase M14 family. The cofactor is Zn(2+). As to expression, gut specific.

The protein localises to the secreted. Involved in the digestion of the blood meal. This chain is Zinc carboxypeptidase, found in Simulium vittatum (Striped black fly).